A 396-amino-acid chain; its full sequence is Flap endonuclease 1 (396 aa).

Positions 1 to 104 (MGIKHLYQLI…GELAKRFQRK (104 aa)) are N-domain. Asp-34 is a Mg(2+) binding site. DNA is bound by residues Arg-47 and Arg-70. 5 residues coordinate Mg(2+): Asp-86, Glu-158, Glu-160, Asp-179, and Asp-181. The I-domain stretch occupies residues 122–255 (DVEKFSRRTV…STALKLIRDH (134 aa)). DNA is bound at residue Glu-158. Residues Gly-233 and Asp-235 each coordinate DNA. Asp-235 contacts Mg(2+). The tract at residues 338 to 396 (MKSAQQSRLEGFFKPVERTPEEKASLKRKADEKLSEKKKKQKEEAKAKKQAKSKPRTAG) is disordered. Residues 342 to 350 (QQSRLEGFF) are interaction with PCNA. A compositionally biased stretch (basic and acidic residues) spans 352-384 (PVERTPEEKASLKRKADEKLSEKKKKQKEEAKA). Basic residues predominate over residues 385–396 (KKQAKSKPRTAG).

It belongs to the XPG/RAD2 endonuclease family. FEN1 subfamily. Interacts with PCNA. Three molecules of FEN1 bind to one PCNA trimer with each molecule binding to one PCNA monomer. PCNA stimulates the nuclease activity without altering cleavage specificity. Mg(2+) is required as a cofactor. Phosphorylated. Phosphorylation upon DNA damage induces relocalization to the nuclear plasma.

The protein localises to the nucleus. It is found in the nucleolus. Its subcellular location is the nucleoplasm. It localises to the mitochondrion. Its function is as follows. Structure-specific nuclease with 5'-flap endonuclease and 5'-3' exonuclease activities involved in DNA replication and repair. During DNA replication, cleaves the 5'-overhanging flap structure that is generated by displacement synthesis when DNA polymerase encounters the 5'-end of a downstream Okazaki fragment. It enters the flap from the 5'-end and then tracks to cleave the flap base, leaving a nick for ligation. Also involved in the long patch base excision repair (LP-BER) pathway, by cleaving within the apurinic/apyrimidinic (AP) site-terminated flap. Acts as a genome stabilization factor that prevents flaps from equilibrating into structures that lead to duplications and deletions. Also possesses 5'-3' exonuclease activity on nicked or gapped double-stranded DNA, and exhibits RNase H activity. Also involved in replication and repair of rDNA and in repairing mitochondrial DNA. In Phaeosphaeria nodorum (strain SN15 / ATCC MYA-4574 / FGSC 10173) (Glume blotch fungus), this protein is Flap endonuclease 1.